A 200-amino-acid chain; its full sequence is Elongation factor Ts (200 aa).

The tract at residues 80–83 (TDFV) is involved in Mg(2+) ion dislocation from EF-Tu.

It belongs to the EF-Ts family.

It localises to the cytoplasm. Associates with the EF-Tu.GDP complex and induces the exchange of GDP to GTP. It remains bound to the aminoacyl-tRNA.EF-Tu.GTP complex up to the GTP hydrolysis stage on the ribosome. The protein is Elongation factor Ts of Caldanaerobacter subterraneus subsp. tengcongensis (strain DSM 15242 / JCM 11007 / NBRC 100824 / MB4) (Thermoanaerobacter tengcongensis).